Here is a 660-residue protein sequence, read N- to C-terminus: DNA mismatch repair protein MutL (660 aa).

It belongs to the DNA mismatch repair MutL/HexB family.

This protein is involved in the repair of mismatches in DNA. It is required for dam-dependent methyl-directed DNA mismatch repair. May act as a 'molecular matchmaker', a protein that promotes the formation of a stable complex between two or more DNA-binding proteins in an ATP-dependent manner without itself being part of a final effector complex. This is DNA mismatch repair protein MutL from Streptococcus pyogenes serotype M3 (strain ATCC BAA-595 / MGAS315).